Consider the following 214-residue polypeptide: Pyrrolidone-carboxylate peptidase 2 (214 aa).

Residues Glu78, Cys141, and His165 contribute to the active site.

This sequence belongs to the peptidase C15 family. In terms of assembly, homotetramer.

The protein resides in the cytoplasm. The enzyme catalyses Release of an N-terminal pyroglutamyl group from a polypeptide, the second amino acid generally not being Pro.. Removes 5-oxoproline from various penultimate amino acid residues except L-proline. In Streptococcus pneumoniae serotype 4 (strain ATCC BAA-334 / TIGR4), this protein is Pyrrolidone-carboxylate peptidase 2.